The chain runs to 422 residues: UDP-N-acetylglucosamine 1-carboxyvinyltransferase (422 aa).

Residue 22-23 (KN) coordinates phosphoenolpyruvate. Arg92 contacts UDP-N-acetyl-alpha-D-glucosamine. The active-site Proton donor is the Cys116. Residue Cys116 is modified to 2-(S-cysteinyl)pyruvic acid O-phosphothioketal. Residues 121–125 (RPVDQ), Asp305, and Ile327 contribute to the UDP-N-acetyl-alpha-D-glucosamine site.

It belongs to the EPSP synthase family. MurA subfamily.

Its subcellular location is the cytoplasm. The catalysed reaction is phosphoenolpyruvate + UDP-N-acetyl-alpha-D-glucosamine = UDP-N-acetyl-3-O-(1-carboxyvinyl)-alpha-D-glucosamine + phosphate. The protein operates within cell wall biogenesis; peptidoglycan biosynthesis. Its function is as follows. Cell wall formation. Adds enolpyruvyl to UDP-N-acetylglucosamine. The sequence is that of UDP-N-acetylglucosamine 1-carboxyvinyltransferase from Sorangium cellulosum (strain So ce56) (Polyangium cellulosum (strain So ce56)).